A 213-amino-acid polypeptide reads, in one-letter code: FMN-dependent NADH:quinone oxidoreductase 1 (213 aa).

An FMN-binding site is contributed by 18 to 20 (SVS).

This sequence belongs to the azoreductase type 1 family. In terms of assembly, homodimer. Requires FMN as cofactor.

The enzyme catalyses 2 a quinone + NADH + H(+) = 2 a 1,4-benzosemiquinone + NAD(+). It carries out the reaction N,N-dimethyl-1,4-phenylenediamine + anthranilate + 2 NAD(+) = 2-(4-dimethylaminophenyl)diazenylbenzoate + 2 NADH + 2 H(+). Functionally, quinone reductase that provides resistance to thiol-specific stress caused by electrophilic quinones. In terms of biological role, also exhibits azoreductase activity. Catalyzes the reductive cleavage of the azo bond in aromatic azo compounds to the corresponding amines. The sequence is that of FMN-dependent NADH:quinone oxidoreductase 1 from Bacillus cereus (strain ATCC 10987 / NRS 248).